Here is a 239-residue protein sequence, read N- to C-terminus: tRNA pseudouridine synthase C (239 aa).

Residue Asp-54 is part of the active site.

This sequence belongs to the pseudouridine synthase RluA family.

The enzyme catalyses uridine(65) in tRNA = pseudouridine(65) in tRNA. Responsible for synthesis of pseudouridine from uracil-65 in transfer RNAs. In Haemophilus influenzae (strain ATCC 51907 / DSM 11121 / KW20 / Rd), this protein is tRNA pseudouridine synthase C (truC).